Reading from the N-terminus, the 258-residue chain is Deoxyribose-phosphate aldolase (258 aa).

Aspartate 101 (proton donor/acceptor) is an active-site residue. Lysine 166 (schiff-base intermediate with acetaldehyde) is an active-site residue. Catalysis depends on lysine 200, which acts as the Proton donor/acceptor.

It belongs to the DeoC/FbaB aldolase family. DeoC type 2 subfamily.

Its subcellular location is the cytoplasm. The enzyme catalyses 2-deoxy-D-ribose 5-phosphate = D-glyceraldehyde 3-phosphate + acetaldehyde. The protein operates within carbohydrate degradation; 2-deoxy-D-ribose 1-phosphate degradation; D-glyceraldehyde 3-phosphate and acetaldehyde from 2-deoxy-alpha-D-ribose 1-phosphate: step 2/2. Its function is as follows. Catalyzes a reversible aldol reaction between acetaldehyde and D-glyceraldehyde 3-phosphate to generate 2-deoxy-D-ribose 5-phosphate. This Actinobacillus pleuropneumoniae serotype 7 (strain AP76) protein is Deoxyribose-phosphate aldolase.